Reading from the N-terminus, the 151-residue chain is Ribosome maturation factor RimP (151 aa).

Belongs to the RimP family.

It localises to the cytoplasm. Its function is as follows. Required for maturation of 30S ribosomal subunits. In Alcanivorax borkumensis (strain ATCC 700651 / DSM 11573 / NCIMB 13689 / SK2), this protein is Ribosome maturation factor RimP.